The following is a 238-amino-acid chain: Aspartate/glutamate leucyltransferase (238 aa).

It belongs to the R-transferase family. Bpt subfamily.

The protein localises to the cytoplasm. It catalyses the reaction N-terminal L-glutamyl-[protein] + L-leucyl-tRNA(Leu) = N-terminal L-leucyl-L-glutamyl-[protein] + tRNA(Leu) + H(+). It carries out the reaction N-terminal L-aspartyl-[protein] + L-leucyl-tRNA(Leu) = N-terminal L-leucyl-L-aspartyl-[protein] + tRNA(Leu) + H(+). In terms of biological role, functions in the N-end rule pathway of protein degradation where it conjugates Leu from its aminoacyl-tRNA to the N-termini of proteins containing an N-terminal aspartate or glutamate. The protein is Aspartate/glutamate leucyltransferase of Shewanella oneidensis (strain ATCC 700550 / JCM 31522 / CIP 106686 / LMG 19005 / NCIMB 14063 / MR-1).